Here is a 279-residue protein sequence, read N- to C-terminus: Oxygen-dependent coproporphyrinogen-III oxidase (279 aa).

Position 102 (serine 102) interacts with substrate. The a divalent metal cation site is built by histidine 106 and histidine 116. The active-site Proton donor is the histidine 116. Substrate is bound at residue 118 to 120 (NTR). A divalent metal cation contacts are provided by histidine 149 and histidine 179. The interval 244-279 (YVEFNLLYDRGTKFGLMTDGNVEAILMSLPPEVKFN) is important for dimerization.

This sequence belongs to the aerobic coproporphyrinogen-III oxidase family. Homodimer. A divalent metal cation is required as a cofactor.

Its subcellular location is the cytoplasm. The enzyme catalyses coproporphyrinogen III + O2 + 2 H(+) = protoporphyrinogen IX + 2 CO2 + 2 H2O. The protein operates within porphyrin-containing compound metabolism; protoporphyrin-IX biosynthesis; protoporphyrinogen-IX from coproporphyrinogen-III (O2 route): step 1/1. Its function is as follows. Involved in the heme biosynthesis. Catalyzes the aerobic oxidative decarboxylation of propionate groups of rings A and B of coproporphyrinogen-III to yield the vinyl groups in protoporphyrinogen-IX. In Rickettsia felis (strain ATCC VR-1525 / URRWXCal2) (Rickettsia azadi), this protein is Oxygen-dependent coproporphyrinogen-III oxidase.